Consider the following 810-residue polypeptide: MVTEEDKEQILNIKIEDEVKTSYLNYAMSVIVSRALPDVRDGLKPVHRRILYSMHEMGLRADKAFKKAGRIVGDVLGKYHPHGDQSIYEALVRLAQDFSLRYPIVIGQGNFGSIDGDPPAAMRYTEARMARVAEELVRDIDKQTVDFRANYDDSLLEPEVLPAAFPFLLVNGSSGIAVGMATNMAPHNLKEICDAIVYMLDHDSVSVYDLIEIVKGPDFPTYAEIIYNESLIKAYTTGKGSVVIRARYHIEEKFEDHIAIIITQIPYAVNKSSLLMKIAFLIKEEKLEGVSDIRDESDREGIRIVLEIKKGFDPHVVMNLLYEYTELRKNFSINNLALVNGIPKQLNLKELISAFIEHRKEIVRRRVEFDLKRAREKAHILEGLNIALRNIDRVIEIIRFARLVKDAKECIIKEFNLSEIQANSILDMKLQKLTSIETEKLEEEFKILLALIKDYEDILNSPERVVNIVREEIINLSLKFGDERRTKIIYDEEVLKTSMSDLMQRENVIVILTKQGFIKRILQDEYKLQGIGGKGLGSFDLQDRDQVNITLCVNTHDFLFMISNEGKLYVINAYGIKDTSRTSKGQNVRELINLGETEEILAIKNCNELSVDNYLLITTANGKIARIETEGFKTVKARGVIVIKLDDNDFVTSAEIVSKNEKIICISKKGNAFAFNSDNIRLTHRGTQGVSGMKVREGDVLIKALAVKQGSHLLVVSENGYGKRLEISKVTDLKRGATGYTCYKKSDEKAGEVVDAITVVQDDEILLVSKGAKVLRTLVDKISEQGKDARGMQVLSLDEDKLISVSKFIK.

Residues 36-502 (LPDVRDGLKP…EVLKTSMSDL (467 aa)) form the Topo IIA-type catalytic domain. Catalysis depends on Tyr124, which acts as the O-(5'-phospho-DNA)-tyrosine intermediate. Residues 529–535 (QGIGGKG) carry the GyrA-box motif.

The protein belongs to the type II topoisomerase GyrA/ParC subunit family. As to quaternary structure, heterotetramer, composed of two GyrA and two GyrB chains. In the heterotetramer, GyrA contains the active site tyrosine that forms a transient covalent intermediate with DNA, while GyrB binds cofactors and catalyzes ATP hydrolysis.

The protein resides in the cytoplasm. It catalyses the reaction ATP-dependent breakage, passage and rejoining of double-stranded DNA.. In terms of biological role, a type II topoisomerase that negatively supercoils closed circular double-stranded (ds) DNA in an ATP-dependent manner to modulate DNA topology and maintain chromosomes in an underwound state. Negative supercoiling favors strand separation, and DNA replication, transcription, recombination and repair, all of which involve strand separation. Also able to catalyze the interconversion of other topological isomers of dsDNA rings, including catenanes and knotted rings. Type II topoisomerases break and join 2 DNA strands simultaneously in an ATP-dependent manner. This is DNA gyrase subunit A from Borrelia hermsii (strain HS1 / DAH).